The sequence spans 105 residues: uncharacterized protein (105 aa).

Its subcellular location is the mitochondrion. This is an uncharacterized protein from Paramecium tetraurelia.